The sequence spans 359 residues: 3-isopropylmalate dehydrogenase (359 aa).

Substrate contacts are provided by Arg96, Arg106, Arg134, and Asp223. Residues Asp223, Asp247, and Asp251 each coordinate Mg(2+). NAD(+) is bound at residue 281-293 (GSAPDIAGQGIAN).

The protein belongs to the isocitrate and isopropylmalate dehydrogenases family. LeuB type 1 subfamily. As to quaternary structure, homodimer. Mg(2+) serves as cofactor. The cofactor is Mn(2+).

It localises to the cytoplasm. The catalysed reaction is (2R,3S)-3-isopropylmalate + NAD(+) = 4-methyl-2-oxopentanoate + CO2 + NADH. The protein operates within amino-acid biosynthesis; L-leucine biosynthesis; L-leucine from 3-methyl-2-oxobutanoate: step 3/4. Catalyzes the oxidation of 3-carboxy-2-hydroxy-4-methylpentanoate (3-isopropylmalate) to 3-carboxy-4-methyl-2-oxopentanoate. The product decarboxylates to 4-methyl-2 oxopentanoate. This chain is 3-isopropylmalate dehydrogenase, found in Chromohalobacter salexigens (strain ATCC BAA-138 / DSM 3043 / CIP 106854 / NCIMB 13768 / 1H11).